A 294-amino-acid polypeptide reads, in one-letter code: Sarcotoxin II-2 (294 aa).

The signal sequence occupies residues 1–22; it reads MKSFVFFAACFAIVALNSLAHA. A propeptide spans 23-24 (removed by a dipeptidylpeptidase); the sequence is YP. Gln-25 carries the post-translational modification Pyrrolidone carboxylic acid. The residue at position 293 (Arg-293) is an Arginine amide.

Belongs to the attacin/sarcotoxin-2 family. As to expression, synthesized by the fat body and is eventually secreted into the hemolymph.

The protein resides in the secreted. Its function is as follows. Sarcotoxin II is an antibacterial protein which plays a role in the inflammatory response of this insect. The main effect of sarcotoxin II on E.coli may be the inhibition of cell wall synthesis, including septum formation. The sequence is that of Sarcotoxin II-2 from Sarcophaga peregrina (Flesh fly).